The chain runs to 628 residues: Cystathionine gamma-synthase-like enzyme iboG2 (628 aa).

Residue tyrosine 313 coordinates substrate. At lysine 417 the chain carries N6-(pyridoxal phosphate)lysine.

It belongs to the trans-sulfuration enzymes family. Pyridoxal 5'-phosphate serves as cofactor.

The protein operates within secondary metabolite biosynthesis. Functionally, cystathionine gamma-synthase-like enzyme; part of the gene cluster that mediates the biosynthesis of the psychoactive metabolites ibotenic acid and muscimol. The first committed step is glutamate hydroxylation by the 2-oxoglutarate-dependent dioxygenase iboH, and the last step is decarboxylation of ibotenic acid to muscimol by the decarboxylase iboD. The order of the intermediate reactions is somewhat ambiguous. IboA likely activates the carboxylic acid at position 5 to introduce an amide bond, and the flavin monooxygenase iboF generates the N-O bond. There are several options for the latter step. One option is that iboF directly hydroxylates the amide nitrogen formed by iboA to produce a hydroxamic acid species. Another option is that iboF hydroxylates an external N-containing compound, whose resulting N-O bond is subsequently introduced into the hydroxyglutamate scaffold. The paralogous PLP-dependent cystathionine gamma-synthase-like enzymes iboG1 and iboG2 are likely involved in substitution of the OH group at position 3 by the O-N moiety. The first cyclic intermediate is most probably tricholomic acid which is likely desaturated to ibotenic acid by the cytochrome P450 monooxygenase iboC. The polypeptide is Cystathionine gamma-synthase-like enzyme iboG2 (Amanita muscaria (strain Koide BX008)).